A 208-amino-acid polypeptide reads, in one-letter code: Small ribosomal subunit protein uS4 (208 aa).

The S4 RNA-binding domain occupies 98 to 158 (SRLDNAVYRL…EKSRNMQVID (61 aa)).

This sequence belongs to the universal ribosomal protein uS4 family. In terms of assembly, part of the 30S ribosomal subunit. Contacts protein S5. The interaction surface between S4 and S5 is involved in control of translational fidelity.

Its function is as follows. One of the primary rRNA binding proteins, it binds directly to 16S rRNA where it nucleates assembly of the body of the 30S subunit. With S5 and S12 plays an important role in translational accuracy. In Desulfosudis oleivorans (strain DSM 6200 / JCM 39069 / Hxd3) (Desulfococcus oleovorans), this protein is Small ribosomal subunit protein uS4.